A 179-amino-acid polypeptide reads, in one-letter code: Small ribosomal subunit protein uS5 (179 aa).

One can recognise an S5 DRBM domain in the interval 22–85; that stretch reads MIEKLVAVNR…EYARKRMANV (64 aa).

This sequence belongs to the universal ribosomal protein uS5 family. In terms of assembly, part of the 30S ribosomal subunit. Contacts proteins S4 and S8.

In terms of biological role, with S4 and S12 plays an important role in translational accuracy. Located at the back of the 30S subunit body where it stabilizes the conformation of the head with respect to the body. The polypeptide is Small ribosomal subunit protein uS5 (Xylella fastidiosa (strain M12)).